The primary structure comprises 170 residues: MSQKVAKEGPRLSKNQKFSEHFSIHCCPPFTFLNSKREIVDRKYSICKSGCFYQKKEEDWICCACQKTSRRATSPQKPKHQPAASPVVVRAPPAKPKSPPRPAKPRSPPIPAKPRSPSRTERQPRPRPEVRPPPAKQKPPQKSKQPARSSPLRGPGTSRGGSPTRAPRFW.

The disordered stretch occupies residues 69-170 (SRRATSPQKP…GSPTRAPRFW (102 aa)). The segment covering 82–92 (PAASPVVVRAP) has biased composition (low complexity). Phosphoserine is present on residues Ser-85, Ser-98, and Ser-107. Residues 93–101 (PAKPKSPPR) form repeat 1. Pro residues predominate over residues 93-114 (PAKPKSPPRPAKPRSPPIPAKP). The 3 X 9 AA approximate tandem repeats stretch occupies residues 93 to 119 (PAKPKSPPRPAKPRSPPIPAKPRSPSR). The stretch at 105–110 (PRSPPI) is one 2; half-length repeat. Repeat unit 3 spans residues 111–119 (PAKPRSPSR). Residues 118–130 (SRTERQPRPRPEV) show a composition bias toward basic and acidic residues. A compositionally biased stretch (low complexity) spans 138 to 151 (KPPQKSKQPARSSP).

Expressed predominantly in oligodendrocytes, in CNS myelin of the cerebrum and spinal cord. No expression seen in sciatic nerve.

It is found in the cytoplasm. It localises to the perinuclear region. Its function is as follows. May play a role in compacting or stabilizing the myelin sheath, possibly by binding the negatively charged acidic phospholipids of the cytoplasmic membrane. The sequence is that of Myelin-associated oligodendrocyte basic protein (Mobp) from Rattus norvegicus (Rat).